The primary structure comprises 147 residues: Cyanate hydratase (147 aa).

Active-site residues include Arg-88, Glu-91, and Ser-114.

This sequence belongs to the cyanase family.

It carries out the reaction cyanate + hydrogencarbonate + 3 H(+) = NH4(+) + 2 CO2. In terms of biological role, catalyzes the reaction of cyanate with bicarbonate to produce ammonia and carbon dioxide. The sequence is that of Cyanate hydratase from Prochlorococcus marinus (strain NATL2A).